The chain runs to 528 residues: Probable cyclic di-GMP phosphodiesterase PdeC (528 aa).

2 helical membrane passes run 14-34 (GIIFLVLFPIILSLWIAFLWA) and 242-262 (HLIFALPAGILGSLVLLLLWL). The region spanning 268–520 (YLSPKRKLQR…VFMQWMEQLP (253 aa)) is the EAL domain.

The protein localises to the cell inner membrane. It carries out the reaction 3',3'-c-di-GMP + H2O = 5'-phosphoguanylyl(3'-&gt;5')guanosine + H(+). Phosphodiesterase (PDE) that catalyzes the hydrolysis of cyclic-di-GMP (c-di-GMP) to 5'-pGpG. Cyclic-di-GMP is a second messenger which controls cell surface-associated traits in bacteria. Overexpression reduces biofilm formation. The sequence is that of Probable cyclic di-GMP phosphodiesterase PdeC from Escherichia coli (strain K12).